A 2254-amino-acid chain; its full sequence is Acetyl-CoA carboxylase 1 (2254 aa).

The Biotin carboxylation domain occupies 36–543 (PIHSILIANN…HTGWLDSRIA (508 aa)). The ATP-grasp domain maps to 189–381 (NSNLVTIPEE…LPAAQVAVGM (193 aa)). ATP is bound at residue 215–272 (CQVVGYPAMIKASWGGGGKGIRKVHNDDEVRALFKQVQGEVPGSPIFIMKVASQSRHL). 3 residues coordinate Mg(2+): Glu338, Glu352, and Asn354. 3 residues coordinate Mn(2+): Glu338, Glu352, and Asn354. Residue Arg356 is part of the active site. The 75-residue stretch at 670–744 (LQNDHDPSKL…QAGELIANLD (75 aa)) folds into the Biotinyl-binding domain. Position 711 is an N6-biotinyllysine (Lys711). A Phosphothreonine modification is found at Thr1031. A Phosphoserine modification is found at Ser1192. Residues 1492–1831 (QYKPLGYLDR…YVGGPLPVLA (340 aa)) enclose the CoA carboxyltransferase N-terminal domain. The carboxyltransferase stretch occupies residues 1492–2150 (QYKPLGYLDR…ESSLVKNVRE (659 aa)). CoA contacts are provided by Arg1740, Lys2041, and Arg2043. Residues 1835–2150 (PPERIVEYVP…ESSLVKNVRE (316 aa)) form the CoA carboxyltransferase C-terminal domain.

In terms of assembly, homodimer. Biotin is required as a cofactor. Mg(2+) serves as cofactor. It depends on Mn(2+) as a cofactor. Expressed in roots, trichomes, epidermal leaf cells, siliques, petals, anthers, and seeds.

It is found in the cytoplasm. It localises to the cytosol. It catalyses the reaction hydrogencarbonate + acetyl-CoA + ATP = malonyl-CoA + ADP + phosphate + H(+). The enzyme catalyses N(6)-biotinyl-L-lysyl-[protein] + hydrogencarbonate + ATP = N(6)-carboxybiotinyl-L-lysyl-[protein] + ADP + phosphate + H(+). Its pathway is lipid metabolism; malonyl-CoA biosynthesis; malonyl-CoA from acetyl-CoA: step 1/1. Its function is as follows. Multifunctional enzyme that catalyzes the carboxylation of acetyl-CoA, forming malonyl-CoA, which is used in the plastid for fatty acid synthesis and in the cytosol in various biosynthetic pathways including fatty acid elongation. Required for very long chain fatty acids elongation. Necessary for embryo and plant development. Plays a central function in embryo morphogenesis, especially in apical meristem development. Involved in cell proliferation and tissue patterning. May act as a repressor of cytokinin response. This is Acetyl-CoA carboxylase 1 (ACC1) from Arabidopsis thaliana (Mouse-ear cress).